A 334-amino-acid polypeptide reads, in one-letter code: Phosphate acyltransferase (334 aa).

The protein belongs to the PlsX family. As to quaternary structure, homodimer. Probably interacts with PlsY.

The protein resides in the cytoplasm. The enzyme catalyses a fatty acyl-[ACP] + phosphate = an acyl phosphate + holo-[ACP]. Its pathway is lipid metabolism; phospholipid metabolism. Its function is as follows. Catalyzes the reversible formation of acyl-phosphate (acyl-PO(4)) from acyl-[acyl-carrier-protein] (acyl-ACP). This enzyme utilizes acyl-ACP as fatty acyl donor, but not acyl-CoA. In Streptococcus thermophilus (strain ATCC BAA-491 / LMD-9), this protein is Phosphate acyltransferase.